The primary structure comprises 239 residues: Probable transcriptional regulatory protein MG332 (239 aa).

It belongs to the TACO1 family.

The protein resides in the cytoplasm. The sequence is that of Probable transcriptional regulatory protein MG332 from Mycoplasma genitalium (strain ATCC 33530 / DSM 19775 / NCTC 10195 / G37) (Mycoplasmoides genitalium).